An 86-amino-acid polypeptide reads, in one-letter code: DNA-directed RNA polymerase subunit omega (86 aa).

Residues 67-76 are compositionally biased toward basic and acidic residues; that stretch reads SAREHAKESQ. Residues 67 to 86 are disordered; the sequence is SAREHAKESQVSEEEVREES. Residues 77–86 are compositionally biased toward acidic residues; the sequence is VSEEEVREES.

It belongs to the RNA polymerase subunit omega family. In terms of assembly, the RNAP catalytic core consists of 2 alpha, 1 beta, 1 beta' and 1 omega subunit. When a sigma factor is associated with the core the holoenzyme is formed, which can initiate transcription.

It catalyses the reaction RNA(n) + a ribonucleoside 5'-triphosphate = RNA(n+1) + diphosphate. Promotes RNA polymerase assembly. Latches the N- and C-terminal regions of the beta' subunit thereby facilitating its interaction with the beta and alpha subunits. The sequence is that of DNA-directed RNA polymerase subunit omega from Nitrosococcus oceani (strain ATCC 19707 / BCRC 17464 / JCM 30415 / NCIMB 11848 / C-107).